We begin with the raw amino-acid sequence, 123 residues long: Large ribosomal subunit protein uL14 (123 aa).

This sequence belongs to the universal ribosomal protein uL14 family. Part of the 50S ribosomal subunit. Forms a cluster with proteins L3 and L19. In the 70S ribosome, L14 and L19 interact and together make contacts with the 16S rRNA in bridges B5 and B8.

Binds to 23S rRNA. Forms part of two intersubunit bridges in the 70S ribosome. This Proteus mirabilis (strain HI4320) protein is Large ribosomal subunit protein uL14.